The chain runs to 601 residues: Rhizobactin siderophore biosynthesis protein RhbF (601 aa).

This sequence belongs to the IucA/IucC family.

It functions in the pathway siderophore biosynthesis; rhizobactin biosynthesis. The chain is Rhizobactin siderophore biosynthesis protein RhbF (rhbF) from Rhizobium meliloti (strain 1021) (Ensifer meliloti).